The chain runs to 135 residues: Large ribosomal subunit protein eL32 (135 aa).

It belongs to the eukaryotic ribosomal protein eL32 family.

This chain is Large ribosomal subunit protein eL32 (rpl32e), found in Methanococcus maripaludis (strain DSM 14266 / JCM 13030 / NBRC 101832 / S2 / LL).